The sequence spans 231 residues: Response regulator MprA (231 aa).

Residues 4-118 enclose the Response regulatory domain; it reads RILVVDDDRA…ELLARMRALL (115 aa). Residue Asp48 is modified to 4-aspartylphosphate. The ompR/PhoB-type DNA-binding region spans 130 to 228; the sequence is SAAMTFSDLS…VRGVGYVLRE (99 aa).

Phosphorylated and dephosphorylated by MprB.

It is found in the cytoplasm. Its function is as follows. Member of the two-component regulatory system MprB/MprA which contributes to maintaining a balance among several systems involved in stress resistance and is required for establishment and maintenance of persistent infection in the host. Functions as a transcriptional regulator that recognizes a 19-bp nucleotide motif comprizing two loosely conserved 8-bp direct DNA-binding motif repeats separated by a 3-bp spacer region. The polypeptide is Response regulator MprA (mprA) (Mycolicibacterium vanbaalenii (strain DSM 7251 / JCM 13017 / BCRC 16820 / KCTC 9966 / NRRL B-24157 / PYR-1) (Mycobacterium vanbaalenii)).